Here is a 389-residue protein sequence, read N- to C-terminus: Pyruvate synthase subunit PorA (389 aa).

In terms of assembly, heterotetramer of one alpha, one beta, one delta and one gamma chain.

It carries out the reaction 2 oxidized [2Fe-2S]-[ferredoxin] + pyruvate + CoA = 2 reduced [2Fe-2S]-[ferredoxin] + acetyl-CoA + CO2 + H(+). In Methanocaldococcus jannaschii (strain ATCC 43067 / DSM 2661 / JAL-1 / JCM 10045 / NBRC 100440) (Methanococcus jannaschii), this protein is Pyruvate synthase subunit PorA (porA).